The sequence spans 2376 residues: Protein Ycf2 (2376 aa).

3 disordered regions span residues 173 to 194, 226 to 256, and 952 to 1011; these read SSQL…GTED, TEIE…EMNN, and KRKK…KRKE. The span at 235–245 shows a compositional bias: low complexity; sequence KGLSGSSSKSR. Basic and acidic residues-rich tracts occupy residues 246–255 and 960–1009; these read LFTEGEKEMN and KRKE…PEKR. 1441–1448 contributes to the ATP binding site; it reads GSIGSGRS. Disordered stretches follow at residues 1515 to 1534, 1860 to 2046, and 2112 to 2230; these read YEDR…DYEP, LVGS…LRPK, and PAEE…DGFS. The span at 1866–2025 shows a compositional bias: acidic residues; it reads TEEEVEGTEE…GEGTEDEEGE (160 aa). Positions 2026–2038 are enriched in basic and acidic residues; sequence GTEKDSSQFDNDR. Composition is skewed to acidic residues over residues 2112–2129 and 2136–2213; these read PAEE…EALE and GEEE…ENDS.

The protein belongs to the Ycf2 family.

The protein resides in the plastid. Its subcellular location is the chloroplast stroma. Probable ATPase of unknown function. Its presence in a non-photosynthetic plant (Epifagus virginiana) and experiments in tobacco indicate that it has an essential function which is probably not related to photosynthesis. This Oenothera glazioviana (Large-flowered evening primrose) protein is Protein Ycf2.